Consider the following 82-residue polypeptide: uncharacterized protein (82 aa).

The 82-residue stretch at 1-82 (MKIHLIRHNT…HVESDIEIDL (82 aa)) folds into the 2Fe-2S ferredoxin-type domain. 4 residues coordinate [2Fe-2S] cluster: C35, C40, C43, and C72.

[2Fe-2S] cluster serves as cofactor.

This is an uncharacterized protein from Haemophilus influenzae (strain ATCC 51907 / DSM 11121 / KW20 / Rd).